The following is a 561-amino-acid chain: MPESKYRQQTIRAPRGTVLTAKSWLTEAPLRMLMNNLDPDVAENPHELVVYGGIGRAARNWECYDAIVDALTRLEADETLLIQSGKPVGVFKTHDNAPRVLIANSNLVPHWATWEHFNELDAKGLAMYGQMTAGSWIYIGSQGIVQGTYETFVEAGRQHYNGTLAGRWVLTAGLGGMGGAQPLAATLAGACSLTIECQQSRIDFRLRTRYVDEQAATLDDALARITRYTREGKAVSVALCANAADILPELVNRGVRPDLVTDQTSAHDPLHGYLPSGWRWEEYQKNAQSDPHGTMQAAKRSMAAHVRAMLAFSKMGVPTFDYGNNIRQMAKEMGVENAFDFPGFVPAYIRPLFCRGIGPFRWVALSGDPQDIYKTDAKVKEIVAEDKHLHHWLDMARERIHFQGLPARICWVGLEWRQKLGLAFNEMVRCGEVSAPIVIGRDHLDSGSVASPNRETEAMRDGSDAVSDWPLLNALLNTASGATWVSLHHGGGVGMGFSQHAGMVIVCDGTDEAAARIRRVLHNDPATGVMRHADAGYDLAVECSVEQGLNLPMVAATQGKG.

NAD(+)-binding positions include glycine 52–glycine 53, glutamine 130, glycine 176–glycine 178, glutamate 196, arginine 201, asparagine 242–alanine 243, glutamine 263–histidine 267, tyrosine 273–leucine 274, and tyrosine 322. Cysteine 410 is an active-site residue. Residue glycine 492 participates in NAD(+) binding.

The protein belongs to the urocanase family. Requires NAD(+) as cofactor.

It is found in the cytoplasm. It carries out the reaction 4-imidazolone-5-propanoate = trans-urocanate + H2O. It participates in amino-acid degradation; L-histidine degradation into L-glutamate; N-formimidoyl-L-glutamate from L-histidine: step 2/3. Catalyzes the conversion of urocanate to 4-imidazolone-5-propionate. The sequence is that of Urocanate hydratase from Salmonella newport (strain SL254).